A 387-amino-acid chain; its full sequence is Phosphoglycerate kinase (387 aa).

Substrate is bound by residues 21 to 23 (DLN), Arg36, and 59 to 62 (HLGR). At Lys84 the chain carries N6-acetyllysine. Substrate-binding residues include Arg113 and Arg146. ATP-binding positions include Lys197, Glu314, and 340–343 (GGDT).

It belongs to the phosphoglycerate kinase family. Monomer.

The protein resides in the cytoplasm. The catalysed reaction is (2R)-3-phosphoglycerate + ATP = (2R)-3-phospho-glyceroyl phosphate + ADP. It functions in the pathway carbohydrate degradation; glycolysis; pyruvate from D-glyceraldehyde 3-phosphate: step 2/5. The protein is Phosphoglycerate kinase of Escherichia coli O9:H4 (strain HS).